A 163-amino-acid polypeptide reads, in one-letter code: Putative pre-16S rRNA nuclease (163 aa).

This sequence belongs to the YqgF nuclease family.

Its subcellular location is the cytoplasm. Its function is as follows. Could be a nuclease involved in processing of the 5'-end of pre-16S rRNA. This chain is Putative pre-16S rRNA nuclease, found in Nitrobacter winogradskyi (strain ATCC 25391 / DSM 10237 / CIP 104748 / NCIMB 11846 / Nb-255).